The primary structure comprises 396 residues: Elongation factor Tu (396 aa).

One can recognise a tr-type G domain in the interval 10–206 (KPHVNVGTIG…ALDTYIPTPE (197 aa)). The tract at residues 19–26 (GHVDHGKT) is G1. Position 19-26 (19-26 (GHVDHGKT)) interacts with GTP. Threonine 26 contacts Mg(2+). A G2 region spans residues 60-64 (GITIN). The tract at residues 81 to 84 (DCPG) is G3. GTP-binding positions include 81–85 (DCPGH) and 136–139 (NKAD). The segment at 136-139 (NKAD) is G4. The G5 stretch occupies residues 174 to 176 (SAK).

This sequence belongs to the TRAFAC class translation factor GTPase superfamily. Classic translation factor GTPase family. EF-Tu/EF-1A subfamily. In terms of assembly, monomer.

The protein localises to the cytoplasm. It carries out the reaction GTP + H2O = GDP + phosphate + H(+). Its function is as follows. GTP hydrolase that promotes the GTP-dependent binding of aminoacyl-tRNA to the A-site of ribosomes during protein biosynthesis. This chain is Elongation factor Tu, found in Janthinobacterium sp. (strain Marseille) (Minibacterium massiliensis).